Consider the following 317-residue polypeptide: Small glutamine-rich tetratricopeptide repeat-containing protein 2 (317 aa).

TPR repeat units lie at residues 14–48 (LKQA…KPEE), 83–116 (AEKL…DPTS), 118–150 (VYYS…DPHH), and 151–184 (ARAF…DPNN). Over residues 198–215 (LNQPSDSSATSGADQART) the composition is skewed to polar residues. Disordered stretches follow at residues 198–224 (LNQP…PDLG) and 298–317 (MNNN…PPPQ).

Belongs to the SGT family.

It localises to the cytoplasm. The protein localises to the nucleus. Functionally, co-chaperone that binds to the molecular chaperone Hsp70 and regulates Hsp70 ATPase activity. This Schizosaccharomyces pombe (strain 972 / ATCC 24843) (Fission yeast) protein is Small glutamine-rich tetratricopeptide repeat-containing protein 2 (sgt2).